The primary structure comprises 714 residues: MADRVNASQGAAAAPTANGPGGVRNVVLVGPSGGGKTTLIEALLVAAKVLSRPGSVTEGTTVCDFDEAEIRQQRSVGLAVASLAYDGIKVNLVDTPGYADFVGELRAGLRAADCALFVIAANEGVDEPTKSLWQECSQVGMPRAVVITKLDHARANYREALTAAQDAFGDKVLPLYLPSGDGLIGLLSQALYEYADGKRTTRTPAESDTERIEEARGALIEGIIEESEDESLMERYLGGETIDESVLIQDLEKAVARGSFFPVIPVCSSTGVGTLELLEVATRGFPSPMEHPLPEVFTPQGVPHAELACDNDAPLLAEVVKTTSDPYVGRVSLVRVFSGTIRPDTTVHVSGHFSSFFGGGTSNTHPDHDEDERIGVLSFPLGKQQRPAAAVVAGDICAIGKLSRAETGDTLSDKAEPLVLKPWTMPEPLLPIAIAAHAKTDEDKLSVGLGRLAAEDPTLRIEQNQETHQVVLWCMGEAHAGVVLDTLANRYGVSVDTIELRVPLRETFAGNAKGHGRHIKQSGGHGQYGVCDIEVEPLPEGSGFEFLDKVVGGAVPRQFIPNVEKGVRAQMDKGVHAGYPVVDIRVTLLDGKAHSVDSSDFAFQMAGALALREAAAATKVILLEPIDEISVLVPDDFVGAVLGDLSSRRGRVLGTETAGHDRTVIKAEVPQVELTRYAIDLRSLAHGAASFTRSFARYEPMPESAAARVKAGAG.

The region spanning 21 to 289 (GGVRNVVLVG…VATRGFPSPM (269 aa)) is the tr-type G domain. Residues 30-37 (GPSGGGKT) are G1. Residue 30–37 (GPSGGGKT) coordinates GTP. Residues 73–77 (QRSVG) form a G2 region. The segment at 94-97 (DTPG) is G3. GTP is bound by residues 94–98 (DTPGY) and 148–151 (TKLD). Residues 148–151 (TKLD) are G4. Residues 267–269 (CSS) are G5.

It belongs to the TRAFAC class translation factor GTPase superfamily. Classic translation factor GTPase family. EF-G/EF-2 subfamily.

The polypeptide is Elongation factor G-like protein (Mycobacterium tuberculosis (strain ATCC 25618 / H37Rv)).